The following is a 774-amino-acid chain: Acetyl-CoA decarbonylase/synthase complex subunit alpha (774 aa).

Residues C73, C76, C77, C79, C84, and C94 each contribute to the [4Fe-4S] cluster site. H117 contacts CO. [Ni-4Fe-4S] cluster-binding residues include H251, C279, and C318. 2 4Fe-4S ferredoxin-type domains span residues 398–427 (LNEV…VKEA) and 436–466 (FKGF…VSMT). The [4Fe-4S] cluster site is built by C408, C411, C414, C418, C446, C449, C452, and C456. [Ni-4Fe-4S] cluster-binding residues include C514, C543, and C578.

It belongs to the Ni-containing carbon monoxide dehydrogenase family. Heterotetramer of two alpha and two epsilon subunits. The ACDS complex is made up of alpha, epsilon, beta, gamma and delta subunits with a probable stoichiometry of (alpha(2)epsilon(2))(4)-beta(8)-(gamma(1)delta(1))(8). It depends on [4Fe-4S] cluster as a cofactor. [Ni-4Fe-4S] cluster is required as a cofactor.

It carries out the reaction CO + 2 oxidized [2Fe-2S]-[ferredoxin] + H2O = 2 reduced [2Fe-2S]-[ferredoxin] + CO2 + 2 H(+). Functionally, part of the ACDS complex that catalyzes the reversible cleavage of acetyl-CoA, allowing autotrophic growth from CO(2). The alpha-epsilon subcomponent functions as a carbon monoxide dehydrogenase. This chain is Acetyl-CoA decarbonylase/synthase complex subunit alpha, found in Methanocaldococcus jannaschii (strain ATCC 43067 / DSM 2661 / JAL-1 / JCM 10045 / NBRC 100440) (Methanococcus jannaschii).